A 203-amino-acid chain; its full sequence is Urease accessory protein UreE (203 aa).

Residues 170–203 are disordered; the sequence is EHHGHSHSHSHSHSHDHDHQHGPSCSHGHHHGHR.

The protein belongs to the UreE family.

The protein localises to the cytoplasm. Functionally, involved in urease metallocenter assembly. Binds nickel. Probably functions as a nickel donor during metallocenter assembly. The polypeptide is Urease accessory protein UreE (Burkholderia mallei (strain SAVP1)).